The primary structure comprises 458 residues: Glycine--tRNA ligase (458 aa).

2 residues coordinate substrate: R97 and E171. ATP is bound by residues 203-205 (RNE), 213-218 (FRTREF), 287-288 (EL), and 331-334 (GADR). 218 to 222 (FEQME) is a binding site for substrate. 327–331 (EPSLG) contacts substrate.

It belongs to the class-II aminoacyl-tRNA synthetase family. In terms of assembly, homodimer.

Its subcellular location is the cytoplasm. It carries out the reaction tRNA(Gly) + glycine + ATP = glycyl-tRNA(Gly) + AMP + diphosphate. Catalyzes the attachment of glycine to tRNA(Gly). The protein is Glycine--tRNA ligase of Bacillus anthracis.